The primary structure comprises 98 residues: Cell division topological specificity factor (98 aa).

Belongs to the MinE family.

Prevents the cell division inhibition by proteins MinC and MinD at internal division sites while permitting inhibition at polar sites. This ensures cell division at the proper site by restricting the formation of a division septum at the midpoint of the long axis of the cell. The polypeptide is Cell division topological specificity factor (Nitrosomonas eutropha (strain DSM 101675 / C91 / Nm57)).